Here is a 98-residue protein sequence, read N- to C-terminus: Sm-like protein LSM8 (98 aa).

Residues alanine 2–glutamate 78 enclose the Sm domain.

It belongs to the snRNP Sm proteins family. In terms of assembly, component of the heptameric LSM2-LSM8 complex that forms a seven-membered ring structure with a donut shape. The LSM subunits are arranged in the order LSM8, LSM2, LSM3, LSM6, LSM5, LSM7 and LSM4. LSM8 subunit interacts only with its two neighboring subunits, LSM2 and LSM4. Interacts with the prefoldin co-chaperone subunits PFD1, PFD2, PFD3, PFD4, PFD5 and PFD6. Expressed in roots, leaves, stems, flowers and siliques.

Its subcellular location is the nucleus. Component of the nuclear LSM2-LSM8 complex which is involved splicing nuclear mRNAs. LSM2-LSM8 binds directly to the U6 small nuclear RNAs (snRNAs). LSM8 is essential for the formation of the nuclear LSM2-LSM8 complex involved in the accurate splicing of selected development-related mRNAs through the stabilization of the spliceosomal U6 snRNA. Plays a critical role in the regulation of development-related gene expression. This Arabidopsis thaliana (Mouse-ear cress) protein is Sm-like protein LSM8.